The chain runs to 880 residues: Valine--tRNA ligase (880 aa).

A 'HIGH' region motif is present at residues 51 to 61 (PNVTGELHLGH). The short motif at 529 to 533 (KMSKT) is the 'KMSKS' region element. ATP is bound at residue lysine 532. Positions 815–854 (MSTMVDLEAEAKRVEAEIAELETQIERLSARLSDTQFLAK) form a coiled coil.

Belongs to the class-I aminoacyl-tRNA synthetase family. ValS type 1 subfamily. In terms of assembly, monomer.

The protein resides in the cytoplasm. The enzyme catalyses tRNA(Val) + L-valine + ATP = L-valyl-tRNA(Val) + AMP + diphosphate. Functionally, catalyzes the attachment of valine to tRNA(Val). As ValRS can inadvertently accommodate and process structurally similar amino acids such as threonine, to avoid such errors, it has a 'posttransfer' editing activity that hydrolyzes mischarged Thr-tRNA(Val) in a tRNA-dependent manner. The chain is Valine--tRNA ligase from Dehalococcoides mccartyi (strain ATCC BAA-2266 / KCTC 15142 / 195) (Dehalococcoides ethenogenes (strain 195)).